Consider the following 364-residue polypeptide: Leucine dehydrogenase (364 aa).

Lys80 is an active-site residue. 180-186 (GVGNVAY) provides a ligand contact to NAD(+).

This sequence belongs to the Glu/Leu/Phe/Val dehydrogenases family.

It catalyses the reaction L-leucine + NAD(+) + H2O = 4-methyl-2-oxopentanoate + NH4(+) + NADH + H(+). Its pathway is amino-acid degradation; L-leucine degradation; 4-methyl-2-oxopentanoate from L-leucine (dehydrogenase route): step 1/1. Its function is as follows. Catalyzes the reversible deamination of L-leucine to 4-methyl-2-oxopentanoate. The sequence is that of Leucine dehydrogenase (yqiT) from Bacillus subtilis (strain 168).